Reading from the N-terminus, the 269-residue chain is MEMO1 family protein TV1383 (269 aa).

Belongs to the MEMO1 family.

This chain is MEMO1 family protein TV1383, found in Thermoplasma volcanium (strain ATCC 51530 / DSM 4299 / JCM 9571 / NBRC 15438 / GSS1).